Reading from the N-terminus, the 470-residue chain is Cannabinoid receptor type 1B (470 aa).

Topologically, residues 1-113 (MKLALHRIAG…CFMILTPAQQ (113 aa)) are extracellular. N78 and N86 each carry an N-linked (GlcNAc...) asparagine glycan. A helical transmembrane segment spans residues 114 to 139 (LVIVILAITLGTFTVLENFVVLCVIL). Residues 140–151 (HSHTLRSRPSYH) lie on the Cytoplasmic side of the membrane. A helical transmembrane segment spans residues 152–172 (FIGSLAVADLIGSIIFVYSFL). Residues 173–184 (DFHVLHRKDSPS) lie on the Extracellular side of the membrane. Residues 185-209 (IFLFKLAGVIASFTASVGSLFLTAI) traverse the membrane as a helical segment. At 210–229 (DRYVSIHRPMAYKRIITKTK) the chain is on the cytoplasmic side. A helical transmembrane segment spans residues 230–252 (AVIAFSVMWAISIEFSLLPLLGW). Residues 253 to 270 (NCKRLHSVCSDIFPLIDE) lie on the Extracellular side of the membrane. A helical membrane pass occupies residues 271–296 (KYLMFWIGMTTVLLLFIIYAYMFILW). At 297 to 341 (KSHHHAVRMLSRSSQRSIIVYTSEGTKVQTVRPEQARMDLRLAKT) the chain is on the cytoplasmic side. Residues 342–362 (LVLILVALIICWGPLLAIMVY) traverse the membrane as a helical segment. At 363–374 (DLFGRVNDFIKT) the chain is on the extracellular side. A helical membrane pass occupies residues 375-396 (VFAFCSMLCLLNSTINPVIYAM). At 397-470 (RSKDLRRAFV…VTASSPAEAV (74 aa)) the chain is on the cytoplasmic side. A lipid anchor (S-palmitoyl cysteine) is attached at C412. Positions 418–434 (SLDSSAESDWNSRSVRS) are enriched in polar residues. Positions 418-450 (SLDSSAESDWNSRSVRSTGGRAGKDRSVGGKPQ) are disordered.

This sequence belongs to the G-protein coupled receptor 1 family. In terms of processing, palmitoylation at Cys-412 is important for recruitment at both plasma membrane and lipid rafts and association with G protein alpha subunits.

Its subcellular location is the cell membrane. The protein localises to the mitochondrion outer membrane. It is found in the cell projection. The protein resides in the axon. It localises to the presynapse. Functionally, G-protein coupled receptor for cannabinoids. Mediates many cannabinoid-induced effects in the central nervous system (CNS), as well as in peripheral tissues. Regulates cellular respiration and energy production in response to cannabinoids. Signaling typically involves reduction in cyclic AMP. The protein is Cannabinoid receptor type 1B (cnr1b) of Takifugu rubripes (Japanese pufferfish).